A 308-amino-acid polypeptide reads, in one-letter code: Testis-specific Y-encoded protein 3 (308 aa).

It belongs to the nucleosome assembly protein (NAP) family.

It is found in the cytoplasm. It localises to the nucleus. In terms of biological role, may be involved in sperm differentiation and proliferation. The sequence is that of Testis-specific Y-encoded protein 3 (TSPY3) from Homo sapiens (Human).